We begin with the raw amino-acid sequence, 139 residues long: Probable disulfide formation protein C 1 (139 aa).

A helical transmembrane segment spans residues 8–27 (EYALFTAWGASFIATLGSLY). A disulfide bridge links Cys37 with Cys40. Helical transmembrane passes span 42-61 (YQRI…VVKK) and 68-85 (YSLP…YHYA). Cys99 and Cys104 are joined by a disulfide. The helical transmembrane segment at 113 to 135 (GFVTIPFLALIGFITIAVCSFIV) threads the bilayer.

The protein belongs to the DsbB family. BdbC subfamily.

The protein resides in the cell membrane. Functionally, required for disulfide bond formation in some proteins. This chain is Probable disulfide formation protein C 1 (bdbC1), found in Bacillus cereus (strain ATCC 10987 / NRS 248).